The chain runs to 357 residues: Ion-translocating oxidoreductase complex subunit D (357 aa).

A run of 3 helical transmembrane segments spans residues 35-55, 88-108, and 119-139; these read VWLYGWPALNLLLITLVTVLV, LPPWAPWWIGVIGGLLAVVLG, and LFNPAMVARVALLIAFPVEMT. FMN phosphoryl threonine is present on threonine 176. 5 consecutive transmembrane segments (helical) span residues 209–229, 233–253, 261–281, 295–315, and 316–336; these read APGSLAEGSALLLALGGVYLI, VIAWEIPAVMLATLAVLATVF, YADAGVHILAGSTLLAAFFIA, AVFAAGCAVIVWVVRTYGGYP, and EATAFAVLLMNAFTPLIDHWI.

Belongs to the NqrB/RnfD family. As to quaternary structure, the complex is composed of six subunits: RnfA, RnfB, RnfC, RnfD, RnfE and RnfG. FMN serves as cofactor.

The protein localises to the cell inner membrane. In terms of biological role, part of a membrane-bound complex that couples electron transfer with translocation of ions across the membrane. This Halorhodospira halophila (strain DSM 244 / SL1) (Ectothiorhodospira halophila (strain DSM 244 / SL1)) protein is Ion-translocating oxidoreductase complex subunit D.